We begin with the raw amino-acid sequence, 1141 residues long: Serine-aspartate repeat-containing protein E (1141 aa).

The first 52 residues, 1–52, serve as a signal peptide directing secretion; sequence MINRDNKKAITKKGMISNRLNKFSIRKYTVGTASILVGTTLIFGLGNQEAKA. The short motif at 23–34 is the YSIRK-G/S signaling motif element; that stretch reads FSIRKYTVGTAS. The segment at 53-601 is ligand binding A region; it reads AENTSTENAK…GDGTVKPEEK (549 aa). Residues 54–248 are disordered; sequence ENTSTENAKQ…RSTKPVATAP (195 aa). Residues 61 to 75 are compositionally biased toward basic and acidic residues; that stretch reads AKQDDATTSDNKEVV. Low complexity predominate over residues 77–90; the sequence is ETENNSTTENDSTN. The segment covering 92 to 108 has biased composition (basic and acidic residues); it reads IKKETNTDSQPEAKEES. Residues 109-126 show a composition bias toward low complexity; the sequence is TTSSTQQQQNNVTATTET. Positions 130–145 are enriched in basic and acidic residues; the sequence is NIEKENVKPSTDKTAT. Polar residues predominate over residues 159 to 207; the sequence is NYTNNDVTTKPSTSEIQTKPTTPQESTNIENSQPQPTPSKVDNQVTDAT. Residues 216–241 are compositionally biased toward basic and acidic residues; the sequence is SKEELKNNPEKLKELVRNDNNTDRST. 3 consecutive CNA-B domains span residues 602-714, 715-824, and 825-935; these read LYKI…YKEP, KYNL…YKTP, and KYSL…EEDT. The disordered stretch occupies residues 929–1117; that stretch reads GYFEEDTSDS…GSENNGSNNA (189 aa). Residues 930–1080 are compositionally biased toward acidic residues; sequence YFEEDTSDSD…DSDSDSDSDS (151 aa). The short motif at 1104-1108 is the LPXTG sorting signal element; that stretch reads LPETG. At Thr1107 the chain carries Pentaglycyl murein peptidoglycan amidated threonine. A propeptide spans 1108–1141 (removed by sortase); it reads GSENNGSNNATLFGGLFAALGSLLLFGRRKKQNK.

Belongs to the serine-aspartate repeat-containing protein (SDr) family. In terms of assembly, interacts with host complement factor H/CFAH (via C-terminus). Interacts with host complement regulator C4BPA.

It is found in the secreted. The protein localises to the cell wall. Functionally, cell surface-associated calcium-binding protein which plays an important role in adhesion and pathogenesis. Contributes to the resistance to killing by innate immune components in blood and thus attenuates bacterial clearance by interacting with host complement factor H/CFAH and modulating its activity. Inhibits also bacterial opsonization and killing by interacting with host complement regulator C4BPA and thus inhibiting classical complement pathway activation. The chain is Serine-aspartate repeat-containing protein E (sdrE) from Staphylococcus aureus (strain Mu50 / ATCC 700699).